A 417-amino-acid polypeptide reads, in one-letter code: Mast cell carboxypeptidase A (417 aa).

Positions 1–15 (MRFFLLMAVIYTTLA) are cleaved as a signal peptide. Positions 16–109 (IAPVHFDREK…IEKQFDVKDE (94 aa)) are cleaved as a propeptide — activation peptide. Residues 118-412 (KYNDWDKIVS…LSVKFIAKYI (295 aa)) form the Peptidase M14 domain. Cystine bridges form between cysteine 173-cysteine 186 and cysteine 245-cysteine 268. The Zn(2+) site is built by histidine 176 and glutamate 179. Histidine 304 lines the Zn(2+) pocket. The Proton donor/acceptor role is filled by glutamate 378.

This sequence belongs to the peptidase M14 family. Zn(2+) serves as cofactor.

Its subcellular location is the cytoplasmic vesicle. The protein localises to the secretory vesicle. The enzyme catalyses Release of a C-terminal amino acid, but little or no action with -Asp, -Glu, -Arg, -Lys or -Pro.. The sequence is that of Mast cell carboxypeptidase A (Cpa3) from Mus musculus (Mouse).